The sequence spans 675 residues: Serine/threonine-protein kinase ATG1 (675 aa).

Residues 25-328 (FVIGGEIGKG…FEDFFNDPVV (304 aa)) form the Protein kinase domain. ATP is bound by residues 31–39 (IGKGSFAQV) and Lys54. Asp168 (proton acceptor) is an active-site residue. A compositionally biased stretch (basic and acidic residues) spans 339–374 (DIPKVEQKPSRDLRSLEADPQREQSELAKSPRERPL). 2 disordered regions span residues 339-455 (DIPK…ERKL) and 501-577 (RLTS…TTRS). 3 stretches are compositionally biased toward polar residues: residues 390–399 (ANVSARTGQS), 516–538 (ATQQ…SAVQ), and 556–565 (ASRSLNTSSA).

It belongs to the protein kinase superfamily. Ser/Thr protein kinase family. APG1/unc-51/ULK1 subfamily. As to quaternary structure, homodimer. Forms a ternary complex with ATG13 and ATG17.

The protein resides in the cytoplasm. It localises to the preautophagosomal structure membrane. The enzyme catalyses L-seryl-[protein] + ATP = O-phospho-L-seryl-[protein] + ADP + H(+). The catalysed reaction is L-threonyl-[protein] + ATP = O-phospho-L-threonyl-[protein] + ADP + H(+). Serine/threonine protein kinase involved in the cytoplasm to vacuole transport (Cvt) and found to be essential in autophagy, where it is required for the formation of autophagosomes. Involved in the clearance of protein aggregates which cannot be efficiently cleared by the proteasome. Required for selective autophagic degradation of the nucleus (nucleophagy) as well as for mitophagy which contributes to regulate mitochondrial quantity and quality by eliminating the mitochondria to a basal level to fulfill cellular energy requirements and preventing excess ROS production. Also involved in endoplasmic reticulum-specific autophagic process, in selective removal of ER-associated degradation (ERAD) substrates. Plays a key role in ATG9 and ATG23 cycling through the pre-autophagosomal structure and is necessary to promote ATG18 binding to ATG9 through phosphorylation of ATG9. Catalyzes phosphorylation of ATG4, decreasing the interaction between ATG4 and ATG8 and impairing deconjugation of PE-conjugated forms of ATG8. The sequence is that of Serine/threonine-protein kinase ATG1 from Colletotrichum lindemuthianum (Bean anthracnose fungus).